The chain runs to 357 residues: Probable leucine aminopeptidase ARB_00576 (357 aa).

The first 15 residues, 1–15, serve as a signal peptide directing secretion; sequence MKVLAALALSALAMA. A glycan (N-linked (GlcNAc...) asparagine) is linked at Asn76. Zn(2+) is bound by residues His167 and Asp185. Residues 169–188 are disordered; the sequence is DSINGNNPQGEAPGADDNGS. N-linked (GlcNAc...) asparagine glycosylation occurs at Asn186. Positions 224 and 251 each coordinate Zn(2+). Asn269 is a glycosylation site (N-linked (GlcNAc...) asparagine). Cys291 and Cys295 are oxidised to a cystine. His324 provides a ligand contact to Zn(2+).

It belongs to the peptidase M28 family. M28E subfamily. In terms of assembly, monomer. Requires Zn(2+) as cofactor.

The protein resides in the secreted. Probable extracellular aminopeptidase which contributes to pathogenicity. This chain is Probable leucine aminopeptidase ARB_00576, found in Arthroderma benhamiae (strain ATCC MYA-4681 / CBS 112371) (Trichophyton mentagrophytes).